The primary structure comprises 42 residues: Profilin (42 aa).

This sequence belongs to the profilin family. As to quaternary structure, occurs in many kinds of cells as a complex with monomeric actin in a 1:1 ratio.

The protein localises to the cytoplasm. It is found in the cytoskeleton. Its function is as follows. Binds to actin and affects the structure of the cytoskeleton. At high concentrations, profilin prevents the polymerization of actin, whereas it enhances it at low concentrations. This is Profilin from Plantago lanceolata (English plantain).